Here is a 382-residue protein sequence, read N- to C-terminus: Lipid-A-disaccharide synthase (382 aa).

This sequence belongs to the LpxB family.

It carries out the reaction 2-N,3-O-bis[(3R)-3-hydroxytetradecanoyl]-alpha-D-glucosaminyl 1-phosphate + UDP-2-N,3-O-bis[(3R)-3-hydroxytetradecanoyl]-alpha-D-glucosamine = lipid A disaccharide (E. coli) + UDP + H(+). The enzyme catalyses a lipid X + a UDP-2-N,3-O-bis[(3R)-3-hydroxyacyl]-alpha-D-glucosamine = a lipid A disaccharide + UDP + H(+). It functions in the pathway glycolipid biosynthesis; lipid IV(A) biosynthesis; lipid IV(A) from (3R)-3-hydroxytetradecanoyl-[acyl-carrier-protein] and UDP-N-acetyl-alpha-D-glucosamine: step 5/6. Condensation of UDP-2,3-diacylglucosamine and 2,3-diacylglucosamine-1-phosphate to form lipid A disaccharide, a precursor of lipid A, a phosphorylated glycolipid that anchors the lipopolysaccharide to the outer membrane of the cell. The chain is Lipid-A-disaccharide synthase from Escherichia coli (strain SMS-3-5 / SECEC).